The following is a 119-amino-acid chain: Ribonuclease P protein component (119 aa).

This sequence belongs to the RnpA family. Consists of a catalytic RNA component (M1 or rnpB) and a protein subunit.

The catalysed reaction is Endonucleolytic cleavage of RNA, removing 5'-extranucleotides from tRNA precursor.. RNaseP catalyzes the removal of the 5'-leader sequence from pre-tRNA to produce the mature 5'-terminus. It can also cleave other RNA substrates such as 4.5S RNA. The protein component plays an auxiliary but essential role in vivo by binding to the 5'-leader sequence and broadening the substrate specificity of the ribozyme. The polypeptide is Ribonuclease P protein component (Aromatoleum aromaticum (strain DSM 19018 / LMG 30748 / EbN1) (Azoarcus sp. (strain EbN1))).